The primary structure comprises 652 residues: MISSSSCMFFLVFAFFLISPVRSSDVEALLSLKSSIDPSNSIPWRGTDPCNWEGVKKCMKGRVSKLVLENLNLSGSLNGKSLNQLDQLRVLSFKGNSLSGSIPNLSGLVNLKSLYLNDNNFSGEFPESLTSLHRLKTVVLSRNRFSGKIPSSLLRLSRLYTFYVQDNLFSGSIPPLNQATLRFFNVSNNQLSGHIPPTQALNRFNESSFTDNIALCGDQIQNSCNDTTGITSTPSAKPAIPVAKTRSRTKLIGIISGSICGGILILLLTFLLICLLWRRKRSKSKREERRSKRVAESKEAKTAETEEGTSDQKNKRFSWEKESEEGSVGTLVFLGRDITVVRYTMDDLLKASAETLGRGTLGSTYKAVMESGFIITVKRLKDAGFPRMDEFKRHIEILGRLKHPNLVPLRAYFQAKEECLLVYDYFPNGSLFSLIHGSKVSGSGKPLHWTSCLKIAEDLAMGLVYIHQNPGLTHGNLKSSNVLLGPDFESCLTDYGLSDLHDPYSIEDTSAASLFYKAPECRDLRKASTQPADVYSFGVLLLELLTGRTSFKDLVHKYGSDISTWVRAVREEETEVSEELNASEEKLQALLTIATACVAVKPENRPAMREVLKMVKDARAEAALFSFNSSDHSPGRWSDTIQSLPREDHMSI.

Positions 1 to 23 (MISSSSCMFFLVFAFFLISPVRS) are cleaved as a signal peptide. Residues 24-256 (SDVEALLSLK…SRTKLIGIIS (233 aa)) lie on the Extracellular side of the membrane. LRR repeat units follow at residues 64 to 84 (SKLV…SLNQ), 85 to 108 (LDQL…LSGL), 109 to 132 (VNLK…LTSL), 134 to 156 (RLKT…LLRL), 158 to 178 (RLYT…PLNQ), and 179 to 203 (ATLR…ALNR). 3 N-linked (GlcNAc...) asparagine glycosylation sites follow: asparagine 72, asparagine 104, and asparagine 120. Asparagine 185, asparagine 205, and asparagine 225 each carry an N-linked (GlcNAc...) asparagine glycan. Residues 257-277 (GSICGGILILLLTFLLICLLW) traverse the membrane as a helical segment. The Cytoplasmic portion of the chain corresponds to 278 to 652 (RRKRSKSKRE…SLPREDHMSI (375 aa)). The interval 286–321 (REERRSKRVAESKEAKTAETEEGTSDQKNKRFSWEK) is disordered. The Protein kinase domain occupies 350 to 624 (KASAETLGRG…VKDARAEAAL (275 aa)). Phosphoserine is present on serine 352. ATP contacts are provided by residues 356–364 (LGRGTLGST) and lysine 378. 2 positions are modified to phosphoserine: serine 430 and serine 433. A Phosphothreonine modification is found at threonine 509. Residues 630–652 (SDHSPGRWSDTIQSLPREDHMSI) form a disordered region.

The protein belongs to the protein kinase superfamily. Ser/Thr protein kinase family.

The protein localises to the cell membrane. This chain is Inactive leucine-rich repeat receptor-like serine/threonine-protein kinase At1g60630, found in Arabidopsis thaliana (Mouse-ear cress).